Consider the following 89-residue polypeptide: Large ribosomal subunit protein bL27 (89 aa).

The protein belongs to the bacterial ribosomal protein bL27 family.

The chain is Large ribosomal subunit protein bL27 from Afipia carboxidovorans (strain ATCC 49405 / DSM 1227 / KCTC 32145 / OM5) (Oligotropha carboxidovorans).